Reading from the N-terminus, the 109-residue chain is Small ribosomal subunit protein bS6 (109 aa).

The protein belongs to the bacterial ribosomal protein bS6 family.

Binds together with bS18 to 16S ribosomal RNA. In Ehrlichia ruminantium (strain Gardel), this protein is Small ribosomal subunit protein bS6.